Here is an 894-residue protein sequence, read N- to C-terminus: MSSDKSIEKNTDTIASEVHEGDNHSNNLGSMEEEIKSTPSDQYEEIAIIPTEPLHSDKELNDKQQSLGHEAPTNVSREEPIGISGDEDTQITEQNVNEQRQETREPSSEIDLNEPLDVEKDVTTDVQAPNGLNIEKEYDAVKENEKVYADTKEVVSSPENREVTGKNSGGEKSSSSKFLDDESGTTTAANANDISISSEVTPERSSENDNNQIHITNEVAAGINLNENKEQKAAIEDGPVTAENLSSETARKVPPIPTQIINEKGDNSSENEVSAIPTTSSPPLPPRQNVATSTSPKLPPRGKQREQPPKTKNAVPPPLEEEMKSEKFRKNFEETKRNSYHHVPLTGSKTAQLESTAEINLIASRYRKTSHHLNKEGEETRESLQEGQSFLKSTFTSFLENLSEYNEVENVNEEDREMFKIDWSFWTQVVNDYATVASNEPENLEAHVTNGIPPQIRGIIWQLMANSKSREMEDIYETLLDTECLHEATIRRDLRRTKFVAEDKMESLYKVIKVYSVYDPDVGYTQGMGFIAAPLLINCENEAESFGLLVGLMKNYGLRELFLPGMPGLMLMLYQFDRLLEEHSPSLYNRLIREGISSTMYATQWFLTFFAYKFPLEFVLRIFDIVFVEGIEVLLKFAVNLMLKNEETLVKLRFDELLDFLKDELFNYYLMGNQDDASVVQMGLSNGNSFKGNDDGTFSYNVDLFVHDAMTGVYITPLTLRRYRGEYVEIHEKEQKKEDHYESLRIQNHQLQREAQKLEHDYSILNKENISAANELIQNRLNMEMLLDEKNDLINTITDIKSQIEEEIRKQNLPNPDASLPKADLREDLERTISRNNEVMRENGQLEERITELQAEIDELININKEQVSTASLLERDSKAKGRKGWTGFKKVFK.

Basic and acidic residues predominate over residues Met1–Asn23. Residues Met1–Lys324 form a disordered region. Ser25 and Ser30 each carry phosphoserine. Thr89 carries the post-translational modification Phosphothreonine. Basic and acidic residues predominate over residues Ile134–Thr164. Polar residues-rich tracts occupy residues Gly184–Val200 and Ser268–Thr279. Residue Ser389 is modified to Phosphoserine. One can recognise a Rab-GAP TBC domain in the interval Gly451–Gly630. Residues Glu732–Ser872 adopt a coiled-coil conformation.

Belongs to the GYP5 family. As to quaternary structure, interacts with GYL1 and RVS167; and is part of SEC4-containing complexes.

It is found in the cytoplasm. The protein localises to the bud. It localises to the bud neck. Its function is as follows. GTPase-activating protein which accelerates the GTP hydrolysis rate of YPT1 and SEC4. Involved in ER to Golgi trafficking and polarized exocytosis. The protein is GTPase-activating protein GYP5 (GYP5) of Saccharomyces cerevisiae (strain ATCC 204508 / S288c) (Baker's yeast).